The chain runs to 874 residues: Alanine--tRNA ligase (874 aa).

Zn(2+) is bound by residues histidine 562, histidine 566, cysteine 665, and histidine 669.

This sequence belongs to the class-II aminoacyl-tRNA synthetase family. Zn(2+) serves as cofactor.

The protein resides in the cytoplasm. It catalyses the reaction tRNA(Ala) + L-alanine + ATP = L-alanyl-tRNA(Ala) + AMP + diphosphate. Its function is as follows. Catalyzes the attachment of alanine to tRNA(Ala) in a two-step reaction: alanine is first activated by ATP to form Ala-AMP and then transferred to the acceptor end of tRNA(Ala). Also edits incorrectly charged Ser-tRNA(Ala) and Gly-tRNA(Ala) via its editing domain. In Pseudomonas entomophila (strain L48), this protein is Alanine--tRNA ligase.